The chain runs to 712 residues: Methylmalonyl-CoA mutase (712 aa).

Residues 73–77, 183–185, arginine 195, lysine 222, histidine 232, and 271–273 each bind substrate; these read TVRQY, TIQ, and RLS. Residues 580–712 enclose the B12-binding domain; sequence KPKIMVAKLG…DLIEGKRRNV (133 aa). Histidine 593 lines the adenosylcob(III)alamin pocket.

The protein belongs to the methylmalonyl-CoA mutase family. As to quaternary structure, homodimer. Adenosylcob(III)alamin is required as a cofactor. Requires a monovalent cation as cofactor.

It catalyses the reaction (R)-methylmalonyl-CoA = succinyl-CoA. It participates in metabolic intermediate metabolism; propanoyl-CoA degradation; succinyl-CoA from propanoyl-CoA: step 3/3. In terms of biological role, radical enzyme that catalyzes the transformation of methylmalonyl-CoA to succinyl-CoA. Is required for growth on the polyhydroxyalkanoate degradation pathway intermediates 3-hydroxybutyrate and acetoacetate as sole carbon source. This chain is Methylmalonyl-CoA mutase, found in Rhizobium meliloti (strain 1021) (Ensifer meliloti).